Consider the following 181-residue polypeptide: Achaete-scute homolog 3 (181 aa).

Residues 93 to 106 (AFTRKRNERERQRV) are basic motif. One can recognise a bHLH domain in the interval 93–145 (AFTRKRNERERQRVKCVNEGYAQLRHHLPEEYLEKRLSKVETLRAAIKYINYL). The interval 107-145 (KCVNEGYAQLRHHLPEEYLEKRLSKVETLRAAIKYINYL) is helix-loop-helix motif.

In terms of assembly, efficient DNA binding requires dimerization with another bHLH protein. Widely expressed in fetal and adult tissues.

Its subcellular location is the nucleus. Transcriptional repressor. Inhibits myogenesis. Plays a role in progenitor cells which differentiate into ductal and acinar, but not myoepithelial, cell lineages in the salivary glands. Involved in the functions of the microvillar cells and Bowman's glands and probably, in a non-cell-autonomous manner, in the development or regeneration of a complete olfactory epithelium (OE). The sequence is that of Achaete-scute homolog 3 from Homo sapiens (Human).